Here is a 263-residue protein sequence, read N- to C-terminus: MINAAVLGACGRMGSLIIENITCSTDMQLVAAFDIGNIGKDAGEFAHVGNLGIQISDVKDLETVLKKTQADVLIDFTAAGATIVNAPIAAGCGVNLIIGTTGITSEQRAVIEEAIRKNQVRAVISPNYSVGVNVFFKIVREAAKYLADYDIEIIEAHHNQKKDAPSGTALRAADVISEALGGKEYVYGREGIAPRGKEIGIHAVRGGDITGDHTVLFVGNSERVEIHHMAHSRQIFAKGAVRAAEWICGQEPGIYSMDDVLGL.

NAD(+)-binding positions include 8–13, Asp-34, 99–101, and 125–128; these read GACGRM, GTT, and SPNY. The Proton donor/acceptor role is filled by His-157. His-158 serves as a coordination point for (S)-2,3,4,5-tetrahydrodipicolinate. The active-site Proton donor is the Lys-161. 167–168 lines the (S)-2,3,4,5-tetrahydrodipicolinate pocket; it reads GT.

It belongs to the DapB family.

The protein resides in the cytoplasm. The enzyme catalyses (S)-2,3,4,5-tetrahydrodipicolinate + NAD(+) + H2O = (2S,4S)-4-hydroxy-2,3,4,5-tetrahydrodipicolinate + NADH + H(+). The catalysed reaction is (S)-2,3,4,5-tetrahydrodipicolinate + NADP(+) + H2O = (2S,4S)-4-hydroxy-2,3,4,5-tetrahydrodipicolinate + NADPH + H(+). It participates in amino-acid biosynthesis; L-lysine biosynthesis via DAP pathway; (S)-tetrahydrodipicolinate from L-aspartate: step 4/4. Catalyzes the conversion of 4-hydroxy-tetrahydrodipicolinate (HTPA) to tetrahydrodipicolinate. This is 4-hydroxy-tetrahydrodipicolinate reductase from Methanosarcina mazei (strain ATCC BAA-159 / DSM 3647 / Goe1 / Go1 / JCM 11833 / OCM 88) (Methanosarcina frisia).